Consider the following 176-residue polypeptide: Tubulin polymerization-promoting protein family member 3 (176 aa).

N-acetylalanine is present on Ala2. The segment at 132–152 (TGSHKERFDESGKGKGIAGRQ) is disordered. Over residues 134-144 (SHKERFDESGK) the composition is skewed to basic and acidic residues.

The protein belongs to the TPPP family. In terms of tissue distribution, expressed in endometrium during the mid-secretory phase (LH + 7) (at protein level).

The protein resides in the cytoplasm. The protein localises to the cytoskeleton. In terms of biological role, regulator of microtubule dynamic that has microtubule bundling activity. Required for embryo implantation; possibly by regulating beta-catenin. Also required for decidualization via regulation of beta-catenin. The protein is Tubulin polymerization-promoting protein family member 3 of Homo sapiens (Human).